The chain runs to 214 residues: Large ribosomal subunit protein bL25 (214 aa).

Positions 178 to 214 are disordered; it reads VEPEEEELPETDEEGEGAEGEAAEAAEGESAEGESEE. Positions 179–214 are enriched in acidic residues; it reads EPEEEELPETDEEGEGAEGEAAEAAEGESAEGESEE.

It belongs to the bacterial ribosomal protein bL25 family. CTC subfamily. In terms of assembly, part of the 50S ribosomal subunit; part of the 5S rRNA/L5/L18/L25 subcomplex. Contacts the 5S rRNA. Binds to the 5S rRNA independently of L5 and L18.

Its function is as follows. This is one of the proteins that binds to the 5S RNA in the ribosome where it forms part of the central protuberance. The polypeptide is Large ribosomal subunit protein bL25 (Corynebacterium jeikeium (strain K411)).